The sequence spans 657 residues: UvrABC system protein B (657 aa).

The region spanning 23 to 414 is the Helicase ATP-binding domain; the sequence is KSIKKGNKYQ…KENIFHQIMR (392 aa). 36 to 43 contacts ATP; it reads GVTGSGKT. Positions 89 to 112 match the Beta-hairpin motif; the sequence is YYDYYQPEAYIPRTDVFIEKDSST. A Helicase C-terminal domain is found at 431–593; sequence QVEILFDEAK…ITPTSVKRHI (163 aa). One can recognise a UVR domain in the interval 622–657; it reads AKLVKELRKQMLEAAKALEFEKAAAIRDEINKLRDL.

It belongs to the UvrB family. As to quaternary structure, forms a heterotetramer with UvrA during the search for lesions. Interacts with UvrC in an incision complex.

It localises to the cytoplasm. Functionally, the UvrABC repair system catalyzes the recognition and processing of DNA lesions. A damage recognition complex composed of 2 UvrA and 2 UvrB subunits scans DNA for abnormalities. Upon binding of the UvrA(2)B(2) complex to a putative damaged site, the DNA wraps around one UvrB monomer. DNA wrap is dependent on ATP binding by UvrB and probably causes local melting of the DNA helix, facilitating insertion of UvrB beta-hairpin between the DNA strands. Then UvrB probes one DNA strand for the presence of a lesion. If a lesion is found the UvrA subunits dissociate and the UvrB-DNA preincision complex is formed. This complex is subsequently bound by UvrC and the second UvrB is released. If no lesion is found, the DNA wraps around the other UvrB subunit that will check the other stand for damage. This is UvrABC system protein B from Campylobacter jejuni subsp. jejuni serotype O:2 (strain ATCC 700819 / NCTC 11168).